The chain runs to 78 residues: Small ribosomal subunit protein uS17 (78 aa).

Belongs to the universal ribosomal protein uS17 family. In terms of assembly, part of the 30S ribosomal subunit.

In terms of biological role, one of the primary rRNA binding proteins, it binds specifically to the 5'-end of 16S ribosomal RNA. The protein is Small ribosomal subunit protein uS17 of Agrobacterium fabrum (strain C58 / ATCC 33970) (Agrobacterium tumefaciens (strain C58)).